The primary structure comprises 267 residues: 2-keto-3-deoxy-L-rhamnonate aldolase (267 aa).

Histidine 49 functions as the Proton acceptor in the catalytic mechanism. Glutamine 151 contacts substrate. Glutamate 153 contributes to the Mg(2+) binding site. Residues alanine 178 and aspartate 179 each contribute to the substrate site. Aspartate 179 is a Mg(2+) binding site.

It belongs to the HpcH/HpaI aldolase family. KDR aldolase subfamily. Homohexamer. Mg(2+) is required as a cofactor.

It catalyses the reaction 2-dehydro-3-deoxy-L-rhamnonate = (S)-lactaldehyde + pyruvate. Functionally, catalyzes the reversible retro-aldol cleavage of 2-keto-3-deoxy-L-rhamnonate (KDR) to pyruvate and lactaldehyde. This chain is 2-keto-3-deoxy-L-rhamnonate aldolase, found in Escherichia coli (strain UTI89 / UPEC).